The chain runs to 332 residues: Probable cytosolic iron-sulfur protein assembly protein 1 (332 aa).

WD repeat units lie at residues 9–48 (GHTD…LVTT), 52–93 (GHNR…WQFL), 98–137 (GHEN…DEFE), 144–183 (DHTQ…WICV), 188–230 (GHES…GGTG), 257–295 (AHTR…QWVV), and 302–332 (AHGV…IWEV).

This sequence belongs to the WD repeat CIA1 family. Interacts with NAR1.

Its subcellular location is the cytoplasm. It localises to the nucleus. Essential component of the cytosolic iron-sulfur (Fe/S) protein assembly machinery. Required for the maturation of extramitochondrial Fe/S proteins. In Yarrowia lipolytica (strain CLIB 122 / E 150) (Yeast), this protein is Probable cytosolic iron-sulfur protein assembly protein 1.